A 471-amino-acid chain; its full sequence is Mixed lineage kinase domain-like protein (471 aa).

The tract at residues M1–Q149 is N-terminal bundle and brace (NBB); mediates INSP6 binding. A coiled-coil region spans residues S55 to N84. S125 bears the Phosphoserine mark. The stretch at Q139–L180 forms a coiled coil. Residues K194–F469 enclose the Protein kinase domain. ATP is bound by residues L209–L217 and K230. Position 357 is a phosphothreonine; by RIPK3 (T357). Phosphoserine; by RIPK3 is present on residues S358 and S360.

This sequence belongs to the protein kinase superfamily. In terms of assembly, homooligomer. Homotrimer; forms homotrimers on necroptosis induction. Upon TNF-induced necrosis, forms in complex with PGAM5, RIPK1 and RIPK3. Within this complex, may play a role in the proper targeting of RIPK1-RIPK3 to its downstream effector PGAM5. Interacts with RIPK3; the interaction is direct and promotes its phosphorylation and subsequent activation. Phosphorylation by RIPK3 induces a conformational switch that is required for necroptosis. It also induces homotrimerization and localization to the plasma membrane.

The protein localises to the cytoplasm. It localises to the cell membrane. Its subcellular location is the nucleus. Activated via binding to highly phosphorylated inositol phosphates such as inositolhexakisphosphate (InsP6) which mediates the release of an N-terminal auto-inhibitory region. Activation requires not only RIPK3-dependent phosphorylation but also binding to highly phosphorylated inositol phosphates. Inhibited by necrosulfonamide, a specific inhibitor of necroptosis that targets Cys-86. Pseudokinase that plays a key role in TNF-induced necroptosis, a programmed cell death process. Does not have protein kinase activity. Activated following phosphorylation by RIPK3, leading to homotrimerization, localization to the plasma membrane and execution of programmed necrosis characterized by calcium influx and plasma membrane damage. In addition to TNF-induced necroptosis, necroptosis can also take place in the nucleus in response to orthomyxoviruses infection: following activation by ZBP1, MLKL is phosphorylated by RIPK3 in the nucleus, triggering disruption of the nuclear envelope and leakage of cellular DNA into the cytosol.following ZBP1 activation, which senses double-stranded Z-RNA structures, nuclear RIPK3 catalyzes phosphorylation and activation of MLKL, promoting disruption of the nuclear envelope and leakage of cellular DNA into the cytosol. Binds to highly phosphorylated inositol phosphates such as inositolhexakisphosphate (InsP6) which is essential for its necroptotic function. The sequence is that of Mixed lineage kinase domain-like protein from Homo sapiens (Human).